Reading from the N-terminus, the 761-residue chain is uncharacterized protein (761 aa).

An N-acetylmethionine modification is found at methionine 1. Disordered stretches follow at residues 1 to 82, 229 to 320, and 590 to 640; these read MEHQ…SSSS, SNII…SALA, and FNRA…PEQQ. The segment covering 13-27 has biased composition (polar residues); that stretch reads NSGSNRVTVYNGTTL. The segment covering 28–45 has biased composition (low complexity); the sequence is PTMPKSATPTSSSTTVTT. Polar residues-rich tracts occupy residues 244–259, 266–276, 590–604, and 627–640; these read TPVS…SSPE, NTTSSSSTSDH, FNRA…STDD, and SKNS…PEQQ.

Phosphorylated by CDC28.

This is an uncharacterized protein from Saccharomyces cerevisiae (strain ATCC 204508 / S288c) (Baker's yeast).